Here is a 156-residue protein sequence, read N- to C-terminus: Small ribosomal subunit protein uS7 (156 aa).

Belongs to the universal ribosomal protein uS7 family. In terms of assembly, part of the 30S ribosomal subunit. Contacts proteins S9 and S11.

One of the primary rRNA binding proteins, it binds directly to 16S rRNA where it nucleates assembly of the head domain of the 30S subunit. Is located at the subunit interface close to the decoding center, probably blocks exit of the E-site tRNA. The protein is Small ribosomal subunit protein uS7 of Streptococcus mutans serotype c (strain ATCC 700610 / UA159).